Consider the following 41-residue polypeptide: Large ribosomal subunit protein bL36 (41 aa).

Belongs to the bacterial ribosomal protein bL36 family.

This chain is Large ribosomal subunit protein bL36, found in Bartonella henselae (strain ATCC 49882 / DSM 28221 / CCUG 30454 / Houston 1) (Rochalimaea henselae).